The sequence spans 350 residues: Probable peptidyl-alpha-hydroxyglycine alpha-amidating lyase pgal-1 (350 aa).

Positions 1–19 (MRASTACLVALLAPFYISA) are cleaved as a signal peptide. Residues 46-90 (DRELIGLFNPSKEIGQVSGLAVNKNGHIVAFHRSGRVWDEKSFND) form an NHL 1 repeat. Residue Asn103 is glycosylated (N-linked (GlcNAc...) asparagine). NHL repeat units follow at residues 113–154 (KKVI…IDAK), 162–206 (LGEK…FDAK), and 212–256 (QINA…FSAG). 2 disulfides stabilise this stretch: Cys176-Cys196 and Cys241-Cys252.

Belongs to the peptidyl-alpha-hydroxyglycine alpha-amidating lyase family. It depends on Zn(2+) as a cofactor.

The protein localises to the secreted. It catalyses the reaction a [peptide]-C-terminal (2S)-2-hydroxyglycine = a [peptide]-C-terminal amide + glyoxylate. In terms of biological role, probable lyase that catalyzes an essential reaction in C-terminal alpha-amidation of peptides. Mediates the dismutation of the unstable peptidyl(2-hydroxyglycine) intermediate to glyoxylate and the corresponding desglycine peptide amide. C-terminal amidation of peptides such as neuropeptides is essential for full biological activity. The protein is Probable peptidyl-alpha-hydroxyglycine alpha-amidating lyase pgal-1 of Caenorhabditis elegans.